An 87-amino-acid polypeptide reads, in one-letter code: Small ribosomal subunit protein bS16 (87 aa).

Belongs to the bacterial ribosomal protein bS16 family.

The polypeptide is Small ribosomal subunit protein bS16 (Variovorax paradoxus (strain S110)).